The following is a 178-amino-acid chain: DNA-directed RNA polymerase V subunit 7 (178 aa).

The protein belongs to the eukaryotic RPB7/RPC8 RNA polymerase subunit family. In terms of assembly, component of the RNA polymerase V complex.

The protein localises to the nucleus. Its function is as follows. DNA-dependent RNA polymerase catalyzes the transcription of DNA into RNA using the four ribonucleoside triphosphates as substrates. Component of RNA polymerase V involved in RNA-directed DNA methylation-dependent (RdDM) silencing of endogenous repeated sequences, including transposable elements. The polypeptide is DNA-directed RNA polymerase V subunit 7 (NRPE7) (Arabidopsis thaliana (Mouse-ear cress)).